The chain runs to 408 residues: Protein ZNF365 (408 aa).

Ser16 bears the Phosphoserine mark. The segment at 26-51 adopts a C2H2-type; degenerate zinc-finger fold; the sequence is FRCPRCGDHTRFRSLSSLRAHLEFSH. Ser139 and Ser146 each carry phosphoserine. Residues 170–298 are a coiled coil; that stretch reads VEAVDRTIEK…QLEYYQSQQA (129 aa). Residue Thr176 is modified to Phosphothreonine. Ser370 is subject to Phosphoserine.

As to quaternary structure, homodimer. Interacts with NDE1 and NDEL1. Interacts with DISC1. Interacts with PARP1. Interacts with MCRS1. Detected in several tissues, with highest levels in brain. Also expressed during embryonic development. Expressed in cerebral cortex, hippocampus, striatum, inferior colliculus and thalamus.

Its subcellular location is the cytoplasm. The protein resides in the cytoskeleton. It localises to the microtubule organizing center. It is found in the centrosome. In terms of biological role, contributes to genomic stability by preventing telomere dysfunction. Involved in the morphogenesis of basket cells in the somatosensory cortex during embryogenesis. Involved in the positive regulation of oligodendrocyte differentiation during postnatal growth. Involved in dendritic arborization, morphogenesis of spine density dendrite, and establishment of postsynaptic dendrite density in cortical pyramidal neurons. Involved in the regulation of neurogenesis. Negatively regulates neurite outgrowth. Involved in homologous recombination (HR) repair pathway. Required for proper resolution of DNA double-strand breaks (DSBs) by HR. Is required for recovery of stalled replication forks, and directly contributes to genomic stability. Interacts with PARP1 and mediates MRE11-dependent DNA end resection during replication fork recovery. This is Protein ZNF365 (Znf365) from Mus musculus (Mouse).